Here is a 157-residue protein sequence, read N- to C-terminus: uncharacterized protein (157 aa).

The 138-residue stretch at 9-146 (LLINYKTLDE…GDFYVWHPET (138 aa)) folds into the N-acetyltransferase domain.

This is an uncharacterized protein from Bacillus anthracis (strain CDC 684 / NRRL 3495).